Reading from the N-terminus, the 418-residue chain is L-rhamnose isomerase (418 aa).

Mn(2+) contacts are provided by His-262, Asp-294, and Asp-296.

Belongs to the rhamnose isomerase family. Homotetramer. Requires Mn(2+) as cofactor.

The protein localises to the cytoplasm. The enzyme catalyses L-rhamnopyranose = L-rhamnulose. It functions in the pathway carbohydrate degradation; L-rhamnose degradation; glycerone phosphate from L-rhamnose: step 1/3. In terms of biological role, catalyzes the interconversion of L-rhamnose and L-rhamnulose. The sequence is that of L-rhamnose isomerase from Yersinia pestis bv. Antiqua (strain Antiqua).